The following is a 67-amino-acid chain: Light-harvesting protein B-870 alpha chain (67 aa).

Met-1 is subject to N-formylmethionine; in strain DSM 149 and DSM 151. At 1-12 (MWRIWRLFDPMR) the chain is on the cytoplasmic side. A helical transmembrane segment spans residues 13-33 (AMVAQAVFLLGLAVLIHLMLL). Residue His-29 participates in a bacteriochlorophyll binding. Over 34–67 (GTNKYNWLDGAKKAPAATAVAPVPAEVTSLAQAK) the chain is Periplasmic.

This sequence belongs to the antenna complex alpha subunit family. An alpha/beta heterodimer. The core complex is formed by different alpha and beta chains, binding bacteriochlorophyll molecules, and arranged most probably in tetrameric structures disposed around the reaction center. The non-pigmented gamma chains may constitute additional components. Post-translationally, the N-terminus is blocked.

It is found in the cell inner membrane. Antenna complexes are light-harvesting systems, which transfer the excitation energy to the reaction centers. The protein is Light-harvesting protein B-870 alpha chain (pufA) of Rubrivivax gelatinosus (Rhodocyclus gelatinosus).